The following is a 985-amino-acid chain: Disease resistance protein At4g27190 (985 aa).

Positions 24–88 (ANAIKFKSNV…ISKARLKLEE (65 aa)) form a coiled coil. The NB-ARC domain occupies 167-429 (IGVWGMGGVG…MAEGFMEELG (263 aa)). 171 to 178 (GMGGVGKT) lines the ATP pocket. LRR repeat units lie at residues 502-523 (SLRRVSLMNNKLESLPDLVEEF), 526-547 (KTSVLLLQGNFLLKEVPIGFLQ), 551-572 (TLRILNLSGTRIKSFPSCSLLR), 575-597 (SLHSLFLRDCFKLVKLPSLETLA), 598-620 (KLELLDLCGTHILEFPRGLEELK), and 621-643 (RFRHLDLSRTLHLESIPARVVSR).

The protein belongs to the disease resistance NB-LRR family.

Functionally, disease resistance protein. The sequence is that of Disease resistance protein At4g27190 from Arabidopsis thaliana (Mouse-ear cress).